The primary structure comprises 312 residues: Heme oxygenase 2 (312 aa).

Ser-2 is subject to N-acetylserine. The residue at position 2 (Ser-2) is a Phosphoserine. His-41 lines the heme b pocket. HRM repeat units lie at residues 260–265 (KCPYYA) and 277–282 (SCPFRA). S-nitrosocysteine occurs at positions 261 and 278.

Belongs to the heme oxygenase family. In terms of processing, S-nitrosylated by BLVRB.

It is found in the microsome. It localises to the endoplasmic reticulum. It carries out the reaction heme b + 3 reduced [NADPH--hemoprotein reductase] + 3 O2 = biliverdin IXalpha + CO + Fe(2+) + 3 oxidized [NADPH--hemoprotein reductase] + 3 H2O + H(+). Its function is as follows. Heme oxygenase cleaves the heme ring at the alpha methene bridge to form biliverdin. Biliverdin is subsequently converted to bilirubin by biliverdin reductase. Under physiological conditions, the activity of heme oxygenase is highest in the spleen, where senescent erythrocytes are sequestrated and destroyed. Heme oxygenase 2 could be implicated in the production of carbon monoxide in brain where it could act as a neurotransmitter. The polypeptide is Heme oxygenase 2 (HMOX2) (Oryctolagus cuniculus (Rabbit)).